The sequence spans 63 residues: UPF0337 protein PSPTO_1596 (63 aa).

Residues 20–63 are disordered; sequence KQAVGKATDNTKLQAEGKAQELKGEGQQAKGEVKDAVKKGVDKV. The segment covering 50-63 has biased composition (basic and acidic residues); it reads GEVKDAVKKGVDKV.

This sequence belongs to the UPF0337 (CsbD) family.

The polypeptide is UPF0337 protein PSPTO_1596 (Pseudomonas syringae pv. tomato (strain ATCC BAA-871 / DC3000)).